The chain runs to 488 residues: Surface lipoprotein assembly modifier 1 (488 aa).

Residues 1–31 (MVIFYFCGKTFMPARNRWMLLLPLLASAAYA) form the signal peptide. Residues 32–202 (EETPREPDLR…LYRKALRERD (171 aa)) are N-terminal domain. 2 TPR repeats span residues 118–151 (MLAL…QPDA) and 171–204 (AADQ…RDAW). The tract at residues 203-488 (AWKVNGGFSV…RAFVEFNKTF (286 aa)) is C-terminal probable beta barrel, partially restores export of lipoproteins. The next 14 membrane-spanning stretches (beta stranded) occupy residues 204 to 214 (WKVNGGFSVTR), 241 to 252 (VNYRLGAEKKWS), 257 to 267 (WYTTAGGDVSG), 280 to 291 (TAGVSGGIGFAD), 294 to 304 (KDAGLAVFHER), 316 to 325 (NGARLYFNRW), 330 to 340 (WQTLSSAEWGR), 354 to 364 (LQISNSLVFYR), 368 to 377 (QYWMGGLDFY), 393 to 402 (GLRFAWGQEW), 407 to 417 (LSSLLRLGAAK), 439 to 448 (LNTSLSLWHR), 455 to 464 (ITPRLTLSHR), and 478 to 488 (NRAFVEFNKTF).

Belongs to the Slam family. In terms of assembly, interacts with the C-terminal domain of surface lipoprotein TbpB.

The protein localises to the cell outer membrane. In terms of biological role, required for correct export to the cell surface of some cell outer membrane lipoproteins both in Neisseria and heterologously in E.coli. This Neisseria meningitidis serogroup B (strain ATCC BAA-335 / MC58) protein is Surface lipoprotein assembly modifier 1.